A 157-amino-acid chain; its full sequence is Protein Smg homolog (157 aa).

The protein belongs to the Smg family.

The protein is Protein Smg homolog of Idiomarina loihiensis (strain ATCC BAA-735 / DSM 15497 / L2-TR).